Here is a 381-residue protein sequence, read N- to C-terminus: Na(+)/H(+) antiporter NhaA 1 (381 aa).

11 helical membrane passes run 18 to 38 (GLLL…SYSA), 53 to 73 (ITHW…GLEL), 89 to 109 (SLPI…FLAL), 118 to 138 (GAGI…SLLG), 147 to 167 (VFLT…IAVF), 170 to 190 (TSIG…LFVL), 210 to 230 (YFML…AFVI), 251 to 271 (PVAF…AIES), 283 to 303 (FGII…FSSI), 321 to 341 (ILGA…ITLL), and 348 to 368 (IIVF…ITGF).

It belongs to the NhaA Na(+)/H(+) (TC 2.A.33) antiporter family.

It localises to the cell inner membrane. The enzyme catalyses Na(+)(in) + 2 H(+)(out) = Na(+)(out) + 2 H(+)(in). In terms of biological role, na(+)/H(+) antiporter that extrudes sodium in exchange for external protons. The protein is Na(+)/H(+) antiporter NhaA 1 of Flavobacterium johnsoniae (strain ATCC 17061 / DSM 2064 / JCM 8514 / BCRC 14874 / CCUG 350202 / NBRC 14942 / NCIMB 11054 / UW101) (Cytophaga johnsonae).